The chain runs to 180 residues: ADP-ribosylation factor 5 (180 aa).

A lipid anchor (N-myristoyl glycine) is attached at Gly-2. GTP contacts are provided by residues 24–31 (GLDAAGKT), 67–71 (DVGGQ), and 126–129 (NKQD).

The protein belongs to the small GTPase superfamily. Arf family.

The protein localises to the golgi apparatus. Functionally, GTP-binding protein involved in protein trafficking; may modulate vesicle budding and uncoating within the Golgi apparatus. The protein is ADP-ribosylation factor 5 (ARF5) of Gallus gallus (Chicken).